The following is a 282-amino-acid chain: MSCRVCLEDRSIKPLPCCKKPVCDECLKRYLSSQVQLGQAEIQCPITECNKHLDESTILYSLPHDDIIKYKYFLELSRMDSSTKPCPQCKHFTTFKRKTHIPNPTKSENKLKIQCPSCQFIWCFRCHAPWHEGVNCREYKKGDKLLRHWANEIEHGQRNAQKCPRCKVHIQRTEGCDHMTCSQCNTNFCYRCGERYRQLRFFGDHTSNLSIFGCKYRYLPERPHVRRLVRGSVCAGKLLIAPLLIVLGLVLGALAVVIGLFGLPIYCLCKKQRKRTRTGMPW.

Residues 1–218 form a TRIAD supradomain region; that stretch reads MSCRVCLEDR…LSIFGCKYRY (218 aa). Residues cysteine 3, cysteine 6, cysteine 23, cysteine 26, cysteine 123, cysteine 126, histidine 131, cysteine 136, cysteine 163, and cysteine 166 each contribute to the Zn(2+) site. The RING-type 1 zinc finger occupies 3-49; the sequence is CRVCLEDRSIKPLPCCKKPVCDECLKRYLSSQVQLGQAEIQCPITEC. The IBR-type zinc finger occupies 68–136; the sequence is IKYKYFLELS…HAPWHEGVNC (69 aa). The RING-type 2; atypical zinc-finger motif lies at 163 to 192; it reads CPRCKVHIQRTEGCDHMTCSQCNTNFCYRC. The active site involves cysteine 176. Cysteine 181, cysteine 184, cysteine 189, cysteine 192, histidine 205, and cysteine 214 together coordinate Zn(2+). Residues 243–263 traverse the membrane as a helical segment; that stretch reads LLIVLGLVLGALAVVIGLFGL.

It belongs to the RBR family. RNF217 subfamily.

The protein resides in the cytoplasm. It is found in the membrane. The enzyme catalyses [E2 ubiquitin-conjugating enzyme]-S-ubiquitinyl-L-cysteine + [acceptor protein]-L-lysine = [E2 ubiquitin-conjugating enzyme]-L-cysteine + [acceptor protein]-N(6)-ubiquitinyl-L-lysine.. The protein operates within protein modification; protein ubiquitination. In terms of biological role, E3 ubiquitin-protein ligase which accepts ubiquitin from E2 ubiquitin-conjugating enzymes in the form of a thioester and then directly transfers the ubiquitin to targeted substrates. Mediates the degradation of the iron exporter ferroportin/SLC40A1 and thus regulates iron homeostasis. In Xenopus laevis (African clawed frog), this protein is E3 ubiquitin-protein ligase RNF217 (rnf217).